A 228-amino-acid polypeptide reads, in one-letter code: Interleukin-27 subunit beta (228 aa).

The first 18 residues, 1-18 (MSKLLFLSLALWASRSPG), serve as a signal peptide directing secretion. Fibronectin type-III domains follow at residues 26–124 (ALSQ…VAER) and 127–224 (KPDP…VESA). N-linked (GlcNAc...) asparagine glycosylation is found at asparagine 54 and asparagine 104.

Belongs to the type I cytokine receptor family. Type 3 subfamily. As to quaternary structure, heterodimer with IL27/IL27A; not disulfide-linked. This heterodimer is known as interleukin IL-27. Heterodimer with IL12A; not disulfide-linked. This heterodimer is known as interleukin IL-35. Interacts with SQSTM1.

The protein resides in the secreted. Associates with IL27 to form the IL-27 interleukin, a heterodimeric cytokine which functions in innate immunity. IL-27 has pro- and anti-inflammatory properties, that can regulate T-helper cell development, suppress T-cell proliferation, stimulate cytotoxic T-cell activity, induce isotype switching in B-cells, and that has diverse effects on innate immune cells. Among its target cells are CD4 T-helper cells which can differentiate in type 1 effector cells (TH1), type 2 effector cells (TH2) and IL17 producing helper T-cells (TH17). It drives rapid clonal expansion of naive but not memory CD4 T-cells. It also strongly synergizes with IL-12 to trigger interferon-gamma/IFN-gamma production of naive CD4 T-cells, binds to the cytokine receptor WSX-1/TCCR. Another important role of IL-27 is its antitumor activity as well as its antiangiogenic activity with activation of production of antiangiogenic chemokines. The sequence is that of Interleukin-27 subunit beta (Ebi3) from Mus musculus (Mouse).